A 156-amino-acid polypeptide reads, in one-letter code: Small ribosomal subunit protein uS7 (156 aa).

It belongs to the universal ribosomal protein uS7 family. As to quaternary structure, part of the 30S ribosomal subunit. Contacts proteins S9 and S11.

In terms of biological role, one of the primary rRNA binding proteins, it binds directly to 16S rRNA where it nucleates assembly of the head domain of the 30S subunit. Is located at the subunit interface close to the decoding center, probably blocks exit of the E-site tRNA. This chain is Small ribosomal subunit protein uS7, found in Carboxydothermus hydrogenoformans (strain ATCC BAA-161 / DSM 6008 / Z-2901).